Consider the following 515-residue polypeptide: Galactose/methyl galactoside import ATP-binding protein MglA (515 aa).

ABC transporter domains follow at residues Leu8 to Glu243 and Ile254 to Leu499. Residue Gly40 to Ser47 coordinates ATP.

Belongs to the ABC transporter superfamily. Galactose/methyl galactoside importer (TC 3.A.1.2.3) family. As to quaternary structure, the complex is composed of one ATP-binding protein (MglA), two transmembrane proteins (MglC) and a solute-binding protein (MglB).

Its subcellular location is the cell membrane. It catalyses the reaction D-galactose(out) + ATP + H2O = D-galactose(in) + ADP + phosphate + H(+). The catalysed reaction is methyl beta-D-galactoside(out) + ATP + H2O = methyl beta-D-galactoside(in) + ADP + phosphate + H(+). Its function is as follows. Part of the ABC transporter complex MglABC involved in galactose/methyl galactoside import. Responsible for energy coupling to the transport system. The chain is Galactose/methyl galactoside import ATP-binding protein MglA from Clostridium perfringens (strain ATCC 13124 / DSM 756 / JCM 1290 / NCIMB 6125 / NCTC 8237 / Type A).